The primary structure comprises 940 residues: Chromatin assembly factor 1 subunit FSM (940 aa).

Disordered stretches follow at residues 317-473, 638-682, and 919-940; these read NVDD…DPCT, VDSD…FFVP, and KTTQNVNGDTDIPRINLLPSSQ. Positions 320-329 are enriched in polar residues; sequence DSQLQKNTST. The stretch at 329–439 forms a coiled coil; it reads TNEKDTQKAQ…LKKQLAIQKQ (111 aa). The span at 330-429 shows a compositional bias: basic and acidic residues; sequence NEKDTQKAQK…QKRREKEAVQ (100 aa). The span at 430–440 shows a compositional bias: low complexity; the sequence is LKKQLAIQKQA. A compositionally biased stretch (basic and acidic residues) spans 445–461; the sequence is RFFKNKKDSEKLEKPGG. Residues 638–650 are compositionally biased toward acidic residues; it reads VDSDDEWEEEDPG.

The protein belongs to the CHAF1A family. Component of the chromatin assembly factor 1 (CAF-1) complex, composed of FSM (FAS1), FAS2 and MSI1. In embryo, expressed in leaf primordia, coleoptile and radicle. In seedlings, expressed in cell division zone of roots, SAM and leaf primordia. Expressed in floral organ primordia.

Its subcellular location is the nucleus. Its function is as follows. Component of the chromatin assembly factor complex (CAF-1) involved in chromatin assembly following DNA replication and DNA repair. Required for several aspects of development, including apical meristem maintenance by regulating the durations of the S- and G2-phases of the cell cycle through its chromatin assembly activity. This chain is Chromatin assembly factor 1 subunit FSM (FSM), found in Oryza sativa subsp. japonica (Rice).